A 914-amino-acid polypeptide reads, in one-letter code: Effector protein hopAE1 (914 aa).

The segment covering 1–13 (MMPSQITRSSHSS) has biased composition (polar residues). The segment at 1-31 (MMPSQITRSSHSSLPEVAPASGDAAGVSEQT) is disordered.

This sequence belongs to the HopW family.

The protein localises to the secreted. The polypeptide is Effector protein hopAE1 (hopAE1) (Pseudomonas syringae pv. syringae (strain B728a)).